We begin with the raw amino-acid sequence, 470 residues long: MAGEDHQWQGSILYNMLMSAKQRHAAPEAPEARLGDQCWGCSCGDEPGVGREGLLGGRNVALLYRCCFCGKDHPRQGSILYSMLTSAKQTYAAPKAPEARLGPCWGCSCGSDPGVGREGLPGGRPVALLYRCCFCGEDHPRQGSILYSLLTSAKQTHVAPAAPEARPGGAWWDRSYFAQRPGGKEGLPGRRAMALLYRCCFCGEDQPQQGSTLYSMPTSTNQTPAAPEERPGAPWWDTSCGALRPVALKNPQVVCEAASAGLLKTLRFVKYLPCFQVLPLDQQLVLVRNCWAPLLMLELAQDHLQFETVEVSEPSMLQKILTTRRRETGGTEPLPVPTLQPHLAPPAEARKVPSASQVQAIKCFLSKCWSLNISTKEYAYLKGTVLFNPDVPGLQCVKYIQGLQWGTQQILSEHIRMTHRGHHDRFIELNSALFLLRFINANVIAELFFRPIIGTVSMDDMMLEMLCTKL.

3 tandem repeats follow at residues 1–67 (MAGE…YRCC), 68–133 (FCGK…YRCC), and 134–200 (FCGE…YRCC). Positions 1 to 253 (MAGEDHQWQG…RPVALKNPQV (253 aa)) are 4 X 67 AA tandem repeats. Short sequence motifs (LXXLL motif) lie at residues 13 to 17 (LYNML), 80 to 84 (LYSML), and 146 to 150 (LYSLL). Residues 201–253 (FCGEDQPQQGSTLYSMPTSTNQTPAAPEERPGAPWWDTSCGALRPVALKNPQV) form a 4; truncated repeat. Residues 205–469 (DQPQQGSTLY…DMMLEMLCTK (265 aa)) form the NR LBD domain. The AF-2 motif motif lies at 461-466 (MMLEML).

Belongs to the nuclear hormone receptor family. NR0 subfamily. As to quaternary structure, homodimer. Interacts with NR5A1, NR5A2, NR0B2 and with COPS2. Interacts with ESRRB; represses ESRRB activity at the GATA6 promoter.

It localises to the nucleus. The protein resides in the cytoplasm. In terms of biological role, nuclear receptor that lacks a DNA-binding domain and acts as a corepressor that inhibits the transcriptional activity of other nuclear receptors through heterodimeric interactions. Component of a cascade required for the development of the hypothalamic-pituitary-adrenal-gonadal axis. May also have a role in the development of the embryo and in the maintenance of embryonic stem cell pluripotency. The protein is Nuclear receptor subfamily 0 group B member 1 (NR0B1) of Callithrix jacchus (White-tufted-ear marmoset).